Consider the following 208-residue polypeptide: Small ribosomal subunit protein uS4 (208 aa).

The S4 RNA-binding domain maps to 98–161; that stretch reads RRLDNVVYRL…KASPRIKELV (64 aa).

The protein belongs to the universal ribosomal protein uS4 family. Part of the 30S ribosomal subunit. Contacts protein S5. The interaction surface between S4 and S5 is involved in control of translational fidelity.

Its function is as follows. One of the primary rRNA binding proteins, it binds directly to 16S rRNA where it nucleates assembly of the body of the 30S subunit. With S5 and S12 plays an important role in translational accuracy. This Desulforamulus reducens (strain ATCC BAA-1160 / DSM 100696 / MI-1) (Desulfotomaculum reducens) protein is Small ribosomal subunit protein uS4.